A 193-amino-acid chain; its full sequence is Ion-translocating oxidoreductase complex subunit A (193 aa).

6 consecutive transmembrane segments (helical) span residues 5–25, 47–67, 72–92, 102–122, 134–154, and 171–191; these read LLLFVGTVLVNNFVLVKFLGL, FVMTLASICAWLIDTWILIPL, LRTLAFILVIAVVVQFTEMVV, LLGIFLPLITTNCAVLGVALL, ALYGFSAAVGFSLVMVLFAAI, and AIALITAGLMSLAFMGFSGLV.

Belongs to the NqrDE/RnfAE family. In terms of assembly, the complex is composed of six subunits: RsxA, RsxB, RsxC, RsxD, RsxE and RsxG.

The protein resides in the cell inner membrane. Its function is as follows. Part of a membrane-bound complex that couples electron transfer with translocation of ions across the membrane. Required to maintain the reduced state of SoxR. This chain is Ion-translocating oxidoreductase complex subunit A, found in Salmonella agona (strain SL483).